Consider the following 378-residue polypeptide: Chaperone protein DnaJ (378 aa).

Positions 6–70 (DYYDVLGVSR…QKRQQYDQFG (65 aa)) constitute a J domain. The segment at 137–219 (GKTSEISYSR…CHGKGVKTQK (83 aa)) adopts a CR-type zinc-finger fold. The Zn(2+) site is built by Cys-150, Cys-153, Cys-167, Cys-170, Cys-193, Cys-196, Cys-207, and Cys-210. 4 CXXCXGXG motif repeats span residues 150–157 (CEVCKGSG), 167–174 (CDKCGGSG), 193–200 (CDKCTGSG), and 207–214 (CHNCHGKG).

The protein belongs to the DnaJ family. Homodimer. Zn(2+) serves as cofactor.

It localises to the cytoplasm. Functionally, participates actively in the response to hyperosmotic and heat shock by preventing the aggregation of stress-denatured proteins and by disaggregating proteins, also in an autonomous, DnaK-independent fashion. Unfolded proteins bind initially to DnaJ; upon interaction with the DnaJ-bound protein, DnaK hydrolyzes its bound ATP, resulting in the formation of a stable complex. GrpE releases ADP from DnaK; ATP binding to DnaK triggers the release of the substrate protein, thus completing the reaction cycle. Several rounds of ATP-dependent interactions between DnaJ, DnaK and GrpE are required for fully efficient folding. Also involved, together with DnaK and GrpE, in the DNA replication of plasmids through activation of initiation proteins. The polypeptide is Chaperone protein DnaJ (Lactobacillus delbrueckii subsp. bulgaricus (strain ATCC 11842 / DSM 20081 / BCRC 10696 / JCM 1002 / NBRC 13953 / NCIMB 11778 / NCTC 12712 / WDCM 00102 / Lb 14)).